The following is a 102-amino-acid chain: Keratinocyte differentiation-associated protein (102 aa).

An N-terminal signal peptide occupies residues 1-22; that stretch reads MKIPILPVVALLSLLALHAVQG.

In terms of tissue distribution, expression restricted to suprabasal keratinocytes of the epidermis.

The protein resides in the secreted. In terms of biological role, may act as a soluble regulator of keratinocyte differentiation. May play an important role in embryonic skin morphogenesis. The polypeptide is Keratinocyte differentiation-associated protein (Mus musculus (Mouse)).